The following is a 262-amino-acid chain: Cytochrome b mRNA maturase bI2 (262 aa).

It belongs to the LAGLIDADG endonuclease family.

Its subcellular location is the mitochondrion. Functionally, this protein is responsible for splicing and maturation of cytochrome b mRNA. Specifically, it may be responsible for the splicing specificity of the second intron. In Debaryomyces hansenii (strain ATCC 36239 / CBS 767 / BCRC 21394 / JCM 1990 / NBRC 0083 / IGC 2968) (Yeast), this protein is Cytochrome b mRNA maturase bI2 (bI2).